We begin with the raw amino-acid sequence, 310 residues long: Olfactory receptor 2A14 (310 aa).

Over 1–24 the chain is Extracellular; that stretch reads MEGNKTWITDITLPRFQVGPALEI. A glycan (N-linked (GlcNAc...) asparagine) is linked at Asn-4. Residues 25-48 traverse the membrane as a helical segment; it reads LLCGLFSAFYTLTLLGNGVIFGII. Topologically, residues 49–56 are cytoplasmic; that stretch reads CLDCKLHT. The helical transmembrane segment at 57 to 78 threads the bilayer; that stretch reads PMYFFLSHLAIVDISYASNYVP. Residues 79-99 lie on the Extracellular side of the membrane; sequence KMLTNLMNQESTISFFPCIMQ. Residues Cys-96 and Cys-188 are joined by a disulfide bond. A helical membrane pass occupies residues 100–119; the sequence is TFLYLAFAHVECLILVVMSY. Residues 120-138 are Cytoplasmic-facing; it reads DRYADICHPLRYNSLMSWR. A helical transmembrane segment spans residues 139–157; that stretch reads VCTVLAVASWVFSFLLALV. Topologically, residues 158-194 are extracellular; sequence PLVLILSLPFCGPHEINHFFCEILSVLKLACADTWLN. Residues 195-218 traverse the membrane as a helical segment; the sequence is QVVIFAACVFILVGPLCLVLVSYL. Over 219–235 the chain is Cytoplasmic; the sequence is RILAAILRIQSGEGRRK. The chain crosses the membrane as a helical span at residues 236–258; the sequence is AFSTCSSHLCVVGLFFGSAIVTY. At 259–271 the chain is on the extracellular side; the sequence is MAPKSRHPEEQQK. Residues 272–291 traverse the membrane as a helical segment; sequence VLSLFYSLFNPMLNPLIYSL. The Cytoplasmic segment spans residues 292 to 310; it reads RNAEVKGALRRALRKERLT.

The protein belongs to the G-protein coupled receptor 1 family.

The protein resides in the cell membrane. Its function is as follows. Odorant receptor. This Homo sapiens (Human) protein is Olfactory receptor 2A14 (OR2A14).